Reading from the N-terminus, the 386-residue chain is Demethylsterigmatocystin 6-O-methyltransferase (386 aa).

137–150 (FDISGPCTQILPDF) serves as a coordination point for substrate. Residues 177–197 (MFEWMPQHPKHMESLGHLMAL) are substrate binding. S-adenosyl-L-methionine-binding positions include 228–229 (GG), Asp-253, 273–274 (NF), and Arg-289. Residue His-293 is the Proton acceptor of the active site.

It belongs to the class I-like SAM-binding methyltransferase superfamily. Cation-independent O-methyltransferase family. COMT subfamily.

It catalyses the reaction 6-demethylsterigmatocystin + S-adenosyl-L-methionine = sterigmatocystin + S-adenosyl-L-homocysteine + H(+). The protein operates within mycotoxin biosynthesis; aflatoxin biosynthesis. Functionally, catalyzes both the conversion of demethylsterigmatocystin (DMST) to sterigmatocystin and the conversion of dihydrodemethylsterigmatocystin to dihydrosterigmatocystin (DHDMST) during aflatoxin biosynthesis. The chain is Demethylsterigmatocystin 6-O-methyltransferase (omtB) from Aspergillus flavus (strain ATCC 200026 / FGSC A1120 / IAM 13836 / NRRL 3357 / JCM 12722 / SRRC 167).